Here is a 541-residue protein sequence, read N- to C-terminus: MTGEKIRSLRRDHKPSKEEGDLLEPGDEEAAAALGGTFTRSRIGKGGKACHKIFSNHHHRLQLKAAPASSNPPGAPALPLHNSSVTANSQSPALLAGTNPVAVVADGGSCPAHYPVHECVFKGDVRRLSSLIRTHNIGQKDNHGNTPLHLAVMLGNKECAHLLLAHNAPVKVKNAQGWSPLAEAISYGDRQMITALLRKLKQQSRESVEEKRPRLLKALKELGDFYLELHWDFQSWVPLLSRILPSDACKIYKQGINIRLDTTLIDFTDMKCQRGDLSFIFNGDAAPSESFVVLDNEQKVYQRIHHEESEMETEEEVDILMSSDIYSATLSTKSISFTRAQTGWLFREDKTERVGNFLADFYLVNGLVLESRKRREHLSEEDILRNKAIMESLSKGGNIMEQNFEPIRRQSLTPPPQNTITWEEYISAENGKAPHLGRELVCKESKKTFKATIAMSQEFPLGIELLLNVLEVVAPFKHFNKLREFVQMKLPPGFPVKLDIPVFPTITATVTFQEFRYDEFDGSIFTIPDDYKEDPSRFPDL.

Residues 1-20 (MTGEKIRSLRRDHKPSKEEG) show a composition bias toward basic and acidic residues. A disordered region spans residues 1–27 (MTGEKIRSLRRDHKPSKEEGDLLEPGD). 3 ANK repeats span residues 111 to 142 (PAHY…QKDN), 143 to 172 (HGNT…PVKV), and 176 to 205 (QGWS…QQSR). Ser-411 carries the post-translational modification Phosphoserine.

Its subcellular location is the endoplasmic reticulum membrane. Functionally, acts as a molecular chaperone for G protein-coupled receptors, regulating their biogenesis and exit from the ER. In Homo sapiens (Human), this protein is Ankyrin repeat domain-containing protein 13C (ANKRD13C).